The following is a 131-amino-acid chain: Leptin receptor overlapping transcript-like 1 (131 aa).

4 consecutive transmembrane segments (helical) span residues 7–27 (LISLSFGGAIGLMFLMLGCAL), 32–52 (QYWPLFVLFFYILSPIPYCIA), 69–89 (LAIFLTTGVVVSAFGLPVVFA), and 100–120 (ALVLTGNTVIFATILGFFLVF).

Belongs to the OB-RGRP/VPS55 family. Interacts with RAB13.

Its subcellular location is the membrane. Functionally, negatively regulates growth hormone (GH) receptor cell surface expression in liver. May play a role in liver resistance to GH during periods of reduced nutrient availability. The protein is Leptin receptor overlapping transcript-like 1 (Leprotl1) of Rattus norvegicus (Rat).